The primary structure comprises 283 residues: tRNA pseudouridine synthase A (283 aa).

Aspartate 52 serves as the catalytic Nucleophile. Tyrosine 148 lines the substrate pocket.

The protein belongs to the tRNA pseudouridine synthase TruA family. Homodimer.

It catalyses the reaction uridine(38/39/40) in tRNA = pseudouridine(38/39/40) in tRNA. In terms of biological role, formation of pseudouridine at positions 38, 39 and 40 in the anticodon stem and loop of transfer RNAs. This Orientia tsutsugamushi (strain Ikeda) (Rickettsia tsutsugamushi) protein is tRNA pseudouridine synthase A.